We begin with the raw amino-acid sequence, 383 residues long: MRMMVAGGGTGGHVFPGIALAEEVVTRHPANDVVFVGTARGLEASVVPAAGFPIELIEVKGLKGKGLVGALLNLLLLPRAFLQSWRILRRWRPDVVVGVGGYASGPVVLTAWAMRIPTAVQEQNAIAGLTNRLLGRVVKAAFTAFPEAARHFAPRKVYQLGNPIRRRLMENYMRPESAHGAPRLLVFGGSQGAHALNMRVIEALPHLADLRERIQITHQTGARDREYVEKGYRACGFTPDVREFIDDMSAAYAGCDLVVCRAGATTLAELTVCKKPSILVPFPAAADNHQVKNARSLVDAGAAVMIEERDLTGEVLAREIRDILDAPERRERMARAAGRLGSPQAAKEIADVCMELVRRRWGSPFGQAREPGQKPARPPDLAS.

UDP-N-acetyl-alpha-D-glucosamine-binding positions include 10 to 12 (TGG), Asn124, Arg165, Ser190, Ile245, and Gln290. Residues 364 to 383 (PFGQAREPGQKPARPPDLAS) form a disordered region.

Belongs to the glycosyltransferase 28 family. MurG subfamily.

It localises to the cell inner membrane. It catalyses the reaction di-trans,octa-cis-undecaprenyl diphospho-N-acetyl-alpha-D-muramoyl-L-alanyl-D-glutamyl-meso-2,6-diaminopimeloyl-D-alanyl-D-alanine + UDP-N-acetyl-alpha-D-glucosamine = di-trans,octa-cis-undecaprenyl diphospho-[N-acetyl-alpha-D-glucosaminyl-(1-&gt;4)]-N-acetyl-alpha-D-muramoyl-L-alanyl-D-glutamyl-meso-2,6-diaminopimeloyl-D-alanyl-D-alanine + UDP + H(+). Its pathway is cell wall biogenesis; peptidoglycan biosynthesis. Its function is as follows. Cell wall formation. Catalyzes the transfer of a GlcNAc subunit on undecaprenyl-pyrophosphoryl-MurNAc-pentapeptide (lipid intermediate I) to form undecaprenyl-pyrophosphoryl-MurNAc-(pentapeptide)GlcNAc (lipid intermediate II). This is UDP-N-acetylglucosamine--N-acetylmuramyl-(pentapeptide) pyrophosphoryl-undecaprenol N-acetylglucosamine transferase from Anaeromyxobacter dehalogenans (strain 2CP-C).